Consider the following 82-residue polypeptide: Large ribosomal subunit protein bL27 (82 aa).

The disordered stretch occupies residues 1-21 (MAHKKGASSSRNGRDSNAKRL).

It belongs to the bacterial ribosomal protein bL27 family.

In Tropheryma whipplei (strain TW08/27) (Whipple's bacillus), this protein is Large ribosomal subunit protein bL27.